A 741-amino-acid polypeptide reads, in one-letter code: Phage T7 exclusion protein (741 aa).

Positions 27–334 (FGNIAENISR…NSLIFLYPGM (308 aa)) constitute a KAP NTPase domain.

Functionally, responsible for the exclusion of phage T7 by plasmid F. Growth of bacteriophage T7 is inhibited in cells of E.coli that carries the plasmid F. The polypeptide is Phage T7 exclusion protein (pifA) (Escherichia coli (strain K12)).